A 158-amino-acid chain; its full sequence is Transcriptional repressor NrdR (158 aa).

Residues 1–20 (MRCPYCQSEDTQVKDSRPAE) are disordered. A zinc finger spans residues 3–34 (CPYCQSEDTQVKDSRPAEDGAVIRRRRVCSVC). A compositionally biased stretch (basic and acidic residues) spans 11–20 (TQVKDSRPAE). Positions 49 to 139 (LMVVKKSGRR…VYRNFSKAVD (91 aa)) constitute an ATP-cone domain.

The protein belongs to the NrdR family. Zn(2+) serves as cofactor.

In terms of biological role, negatively regulates transcription of bacterial ribonucleotide reductase nrd genes and operons by binding to NrdR-boxes. In Brucella anthropi (strain ATCC 49188 / DSM 6882 / CCUG 24695 / JCM 21032 / LMG 3331 / NBRC 15819 / NCTC 12168 / Alc 37) (Ochrobactrum anthropi), this protein is Transcriptional repressor NrdR.